The following is a 246-amino-acid chain: 1-(5-phosphoribosyl)-5-[(5-phosphoribosylamino)methylideneamino] imidazole-4-carboxamide isomerase (246 aa).

Residue D7 is the Proton acceptor of the active site. D130 (proton donor) is an active-site residue.

The protein belongs to the HisA/HisF family.

It is found in the cytoplasm. The enzyme catalyses 1-(5-phospho-beta-D-ribosyl)-5-[(5-phospho-beta-D-ribosylamino)methylideneamino]imidazole-4-carboxamide = 5-[(5-phospho-1-deoxy-D-ribulos-1-ylimino)methylamino]-1-(5-phospho-beta-D-ribosyl)imidazole-4-carboxamide. It participates in amino-acid biosynthesis; L-histidine biosynthesis; L-histidine from 5-phospho-alpha-D-ribose 1-diphosphate: step 4/9. This chain is 1-(5-phosphoribosyl)-5-[(5-phosphoribosylamino)methylideneamino] imidazole-4-carboxamide isomerase, found in Sodalis glossinidius (strain morsitans).